Consider the following 434-residue polypeptide: Meiosis-specific kinetochore protein (434 aa).

2 disordered regions span residues M1 to T102 and V249 to K289. Over residues K46–S62 the composition is skewed to basic and acidic residues. Over residues L64 to S76 the composition is skewed to polar residues. The POLO box domain (PBD)-binding signature appears at S334–P336. Residues E391–C394 form a required for localization to kinetochores region. The tract at residues Q404–L424 is disordered.

Interacts with CENPC. Interacts with PLK1; required for recruitment of PLK1 at kinetochores. Germ cell-specific. Expressed in both testis and ovary. Not expressed in other tissues.

The protein resides in the chromosome. It is found in the centromere. Its subcellular location is the kinetochore. In terms of biological role, key regulator of kinetochore function during meiosis I: required both for mono-orientation of kinetochores on sister chromosomes and protection of centromeric cohesin from separase-mediated cleavage. Acts by facilitating kinetochore mono-orientation during meiosis I, when kinetochores on sister chromosomes face the same direction and are thus captured and pulled by spindle fibers from the same pole. Also required to prevent cleavage of cohesin at centromeres during meiosis I, possibly by acting as a regulator of the shugoshin-dependent protection pathway. Acts in collaboration with PLK1: required for PLK1 enrichment to kinetochores. Not required during meiosis II or mitosis. The polypeptide is Meiosis-specific kinetochore protein (Mus musculus (Mouse)).